A 252-amino-acid polypeptide reads, in one-letter code: uncharacterized protein (252 aa).

Residues 1-20 (MIATLGNLIIPVIFVNYVAS) form the signal peptide.

It belongs to the ascovirus HvAV ORF17 family.

This is an uncharacterized protein from Spodoptera frugiperda ascovirus 1a (SfAV-1a).